Here is a 440-residue protein sequence, read N- to C-terminus: Glucose-1-phosphate adenylyltransferase (440 aa).

Residues Tyr125, Gly190, 205 to 206 (EK), and Ser223 contribute to the alpha-D-glucose 1-phosphate site.

This sequence belongs to the bacterial/plant glucose-1-phosphate adenylyltransferase family. In terms of assembly, homotetramer.

It catalyses the reaction alpha-D-glucose 1-phosphate + ATP + H(+) = ADP-alpha-D-glucose + diphosphate. It participates in glycan biosynthesis; glycogen biosynthesis. Functionally, involved in the biosynthesis of ADP-glucose, a building block required for the elongation reactions to produce glycogen. Catalyzes the reaction between ATP and alpha-D-glucose 1-phosphate (G1P) to produce pyrophosphate and ADP-Glc. The protein is Glucose-1-phosphate adenylyltransferase of Dechloromonas aromatica (strain RCB).